Consider the following 1092-residue polypeptide: Extended synaptotagmin-1 (1092 aa).

Position 1 is an N-acetylmethionine (Met-1). Over Met-1–Ser-28 the chain is Cytoplasmic. The segment at Met-1–Gly-36 is disordered. The chain crosses the membrane as a helical span at residues Gly-29–Gly-49. The Lumenal portion of the chain corresponds to Arg-50–Leu-52. Residues Leu-53–Phe-73 form a helical membrane-spanning segment. At Gly-74 to Ser-1092 the chain is on the cytoplasmic side. The region spanning Asp-125–Val-303 is the SMP-LTD domain. 4 C2 domains span residues Leu-302–Tyr-423, Asp-444–Ser-570, Asp-616–Leu-738, and Gln-769–Gly-886. Ser-314 is modified (phosphoserine; by CDK5). Residues Lys-334, Asp-335, Asp-347, Asp-394, Asp-396, Asp-398, Asp-400, and Asp-401 each coordinate Ca(2+). The segment at Trp-604–Ser-628 is disordered. The residue at position 804 (Lys-804) is an N6-acetyllysine. Position 807 is a phosphoserine (Ser-807). The tract at residues His-909–Ser-937 is disordered. A compositionally biased stretch (low complexity) spans His-911–Ser-921. A phosphoserine mark is found at Ser-937 and Ser-951. The region spanning Pro-959–Tyr-1081 is the C2 5 domain. Residue Tyr-997 is modified to Phosphotyrosine. Residues Lys-1006–Lys-1013 form a required for phosphatidylinositol 4,5-bisphosphate-dependent location at the cell membrane region.

The protein belongs to the extended synaptotagmin family. As to quaternary structure, interacts with ESYT2 and ESYT3. Interacts with ADGRD1; inhibiting the G-protein-coupled receptor activity of ADGRD1. Interaction with ADGRD1 is abolished when cytosolic calcium increases, relieving ADGRD1 G-protein-coupled receptor activity. Interacts (phosphorylated form) with SLC2A4. Post-translationally, phosphorylated on Ser residues in insulin-treated adipocytes (in vitro); this promotes interaction with SLC2A4.

The protein localises to the endoplasmic reticulum membrane. It localises to the cell membrane. Binds calcium (via the C2 domains) and translocates to sites of contact between the endoplasmic reticulum and the cell membrane in response to increased cytosolic calcium levels. Helps tether the endoplasmic reticulum to the cell membrane and promotes the formation of appositions between the endoplasmic reticulum and the cell membrane. Acts as an inhibitor of ADGRD1 G-protein-coupled receptor activity in absence of cytosolic calcium. Binds glycerophospholipids in a barrel-like domain and may play a role in cellular lipid transport. The protein is Extended synaptotagmin-1 (Esyt1) of Mus musculus (Mouse).